A 463-amino-acid polypeptide reads, in one-letter code: Cysteine--tRNA ligase (463 aa).

C27 lines the Zn(2+) pocket. Residues 29–39 (PTVYGLIHIGN) carry the 'HIGH' region motif. Positions 207, 232, and 236 each coordinate Zn(2+). Positions 264–268 (KMSKS) match the 'KMSKS' region motif. K267 contacts ATP.

Belongs to the class-I aminoacyl-tRNA synthetase family. In terms of assembly, monomer. Zn(2+) is required as a cofactor.

The protein localises to the cytoplasm. The enzyme catalyses tRNA(Cys) + L-cysteine + ATP = L-cysteinyl-tRNA(Cys) + AMP + diphosphate. This Pseudothermotoga lettingae (strain ATCC BAA-301 / DSM 14385 / NBRC 107922 / TMO) (Thermotoga lettingae) protein is Cysteine--tRNA ligase.